The primary structure comprises 215 residues: Pre-hexon-linking protein VIII (215 aa).

The residue at position 62 (Thr62) is a Phosphothreonine; by host. Residues 110–150 constitute a propeptide that is removed on maturation; that stretch reads AWINYKNGSVRYEAPLQLAEEQVGGPLNAFAIKHQLQLAGG.

It belongs to the adenoviridae hexon-linking protein family. Interacts with the peripentonal hexons as well as the hexons in the facets. Part of a complex composed of the core-capsid bridging protein, the endosome lysis protein VI and the hexon-linking protein VIII; these interactions bridge the virus core to the capsid. Cleaved by the viral protease during virion maturation. May cause the middle segment to be shed from the capsid.

The protein resides in the virion. It is found in the host nucleus. In terms of biological role, structural component of the virion that acts as a cement protein on the capsid interior and which glue the peripentonal hexons and group-of-nine hexons together. The protein is Pre-hexon-linking protein VIII of Murine adenovirus A serotype 1 (MAdV-1).